Here is a 38-residue protein sequence, read N- to C-terminus: Defensin (38 aa).

Intrachain disulfides connect C4–C26, C11–C34, and C15–C36.

It belongs to the invertebrate defensin family. Type 2 subfamily.

The protein localises to the secreted. Mediates the inducible antibacterial activity in larvae of A.cyanea. The protein is Defensin of Aeshna cyanea (Southern hawker dragonfly).